We begin with the raw amino-acid sequence, 502 residues long: UDP-N-acetylmuramate--L-alanine ligase (502 aa).

An ATP-binding site is contributed by 119 to 125 (GSHGKST).

It belongs to the MurCDEF family.

It is found in the cytoplasm. It catalyses the reaction UDP-N-acetyl-alpha-D-muramate + L-alanine + ATP = UDP-N-acetyl-alpha-D-muramoyl-L-alanine + ADP + phosphate + H(+). The protein operates within cell wall biogenesis; peptidoglycan biosynthesis. In terms of biological role, cell wall formation. This Frankia casuarinae (strain DSM 45818 / CECT 9043 / HFP020203 / CcI3) protein is UDP-N-acetylmuramate--L-alanine ligase.